A 182-amino-acid chain; its full sequence is Bifunctional protein PyrR (182 aa).

The PRPP-binding motif lies at 99–111; it reads VVLVDDVLFTGRT.

Belongs to the purine/pyrimidine phosphoribosyltransferase family. PyrR subfamily.

The enzyme catalyses UMP + diphosphate = 5-phospho-alpha-D-ribose 1-diphosphate + uracil. Functionally, regulates the transcription of the pyrimidine nucleotide (pyr) operon in response to exogenous pyrimidines. In terms of biological role, also displays a weak uracil phosphoribosyltransferase activity which is not physiologically significant. The polypeptide is Bifunctional protein PyrR (Chloroflexus aurantiacus (strain ATCC 29366 / DSM 635 / J-10-fl)).